The following is a 194-amino-acid chain: RNA polymerase II subunit A C-terminal domain phosphatase SSU72 like protein 5 (194 aa).

It belongs to the SSU72 phosphatase family.

It localises to the nucleus. It carries out the reaction O-phospho-L-seryl-[protein] + H2O = L-seryl-[protein] + phosphate. It catalyses the reaction O-phospho-L-threonyl-[protein] + H2O = L-threonyl-[protein] + phosphate. Protein phosphatase that catalyzes the dephosphorylation of the C-terminal domain of RNA polymerase II. Plays a role in RNA processing and termination. In Homo sapiens (Human), this protein is RNA polymerase II subunit A C-terminal domain phosphatase SSU72 like protein 5.